Reading from the N-terminus, the 208-residue chain is uncharacterized protein (208 aa).

This is an uncharacterized protein from Bacillus subtilis (strain 168).